The following is a 324-amino-acid chain: tRNA pseudouridine synthase B (324 aa).

D49 acts as the Nucleophile in catalysis. A disordered region spans residues 87 to 107 (RSTDDLEGQPTKTSDKRPSRE).

This sequence belongs to the pseudouridine synthase TruB family. Type 1 subfamily.

It catalyses the reaction uridine(55) in tRNA = pseudouridine(55) in tRNA. Responsible for synthesis of pseudouridine from uracil-55 in the psi GC loop of transfer RNAs. This Brucella melitensis biotype 1 (strain ATCC 23456 / CCUG 17765 / NCTC 10094 / 16M) protein is tRNA pseudouridine synthase B.